The chain runs to 270 residues: DNA repair protein RecO (270 aa).

The interval 202 to 221 (PELPPSTIDADTDNPSQPPS) is disordered.

It belongs to the RecO family.

In terms of biological role, involved in DNA repair and RecF pathway recombination. The polypeptide is DNA repair protein RecO (Rhodopirellula baltica (strain DSM 10527 / NCIMB 13988 / SH1)).